A 539-amino-acid chain; its full sequence is Oviduct-specific glycoprotein (539 aa).

Positions 1-21 (MGKLLLWVGLLLMLKHHDGAA) are cleaved as a signal peptide. A GH18 domain is found at 22–385 (HKLVCYFTNW…HTLNNLLVND (364 aa)). A disulfide bridge links Cys26 with Cys51. Residues 71 to 72 (PL), 98 to 101 (GGWN), Tyr142, 211 to 214 (LSYD), and Trp355 each bind chitin. An N-linked (GlcNAc...) asparagine glycan is attached at Asn402. 2 disordered regions span residues 433 to 480 (TETH…KPLT) and 503 to 539 (QKVT…LERL). The segment covering 440–457 (ATMTTTPRGETATPTRTP) has biased composition (low complexity).

It belongs to the glycosyl hydrolase 18 family. As to expression, oviduct.

It is found in the cytoplasmic vesicle. It localises to the secretory vesicle. Its function is as follows. Binds to oocyte zona pellucida in vivo. May play a role in the fertilization process and/or early embryonic development. This Ovis aries (Sheep) protein is Oviduct-specific glycoprotein (OVGP1).